Here is a 297-residue protein sequence, read N- to C-terminus: Formylmethanofuran--tetrahydromethanopterin formyltransferase (297 aa).

The protein belongs to the FTR family. As to quaternary structure, homotetramer.

It is found in the cytoplasm. It catalyses the reaction N-formylmethanofuran + 5,6,7,8-tetrahydromethanopterin + H(+) = N(5)-formyl-5,6,7,8-tetrahydromethanopterin + methanofuran. It participates in one-carbon metabolism; methanogenesis from CO(2); 5,10-methenyl-5,6,7,8-tetrahydromethanopterin from CO(2): step 2/3. Its function is as follows. Catalyzes the reversible transfer of a formyl group from formylmethanofuran (formyl-MFR) to tetrahydromethanopterin (H(4)MPT) to produce 5-formyl tetrahydromethanopterin (5-formyl-H(4)MPT) and methanofuran (MFR). This is Formylmethanofuran--tetrahydromethanopterin formyltransferase from Methanosarcina mazei (strain ATCC BAA-159 / DSM 3647 / Goe1 / Go1 / JCM 11833 / OCM 88) (Methanosarcina frisia).